The chain runs to 155 residues: Ribosome maturation factor RimP (155 aa).

The protein belongs to the RimP family.

It is found in the cytoplasm. Its function is as follows. Required for maturation of 30S ribosomal subunits. This Exiguobacterium sibiricum (strain DSM 17290 / CCUG 55495 / CIP 109462 / JCM 13490 / 255-15) protein is Ribosome maturation factor RimP.